The primary structure comprises 203 residues: ATP-dependent Clp protease proteolytic subunit (203 aa).

Ser-107 functions as the Nucleophile in the catalytic mechanism. The active site involves His-132.

This sequence belongs to the peptidase S14 family. In terms of assembly, fourteen ClpP subunits assemble into 2 heptameric rings which stack back to back to give a disk-like structure with a central cavity, resembling the structure of eukaryotic proteasomes.

Its subcellular location is the cytoplasm. The catalysed reaction is Hydrolysis of proteins to small peptides in the presence of ATP and magnesium. alpha-casein is the usual test substrate. In the absence of ATP, only oligopeptides shorter than five residues are hydrolyzed (such as succinyl-Leu-Tyr-|-NHMec, and Leu-Tyr-Leu-|-Tyr-Trp, in which cleavage of the -Tyr-|-Leu- and -Tyr-|-Trp bonds also occurs).. Cleaves peptides in various proteins in a process that requires ATP hydrolysis. Has a chymotrypsin-like activity. Plays a major role in the degradation of misfolded proteins. The sequence is that of ATP-dependent Clp protease proteolytic subunit from Shewanella frigidimarina (strain NCIMB 400).